Here is a 363-residue protein sequence, read N- to C-terminus: Peptide chain release factor 2 (363 aa).

Q251 carries the N5-methylglutamine modification.

Belongs to the prokaryotic/mitochondrial release factor family. Post-translationally, methylated by PrmC. Methylation increases the termination efficiency of RF2.

The protein resides in the cytoplasm. Peptide chain release factor 2 directs the termination of translation in response to the peptide chain termination codons UGA and UAA. This Helicobacter acinonychis (strain Sheeba) protein is Peptide chain release factor 2.